Reading from the N-terminus, the 418-residue chain is E3 ubiquitin-protein ligase makorin-2 (418 aa).

2 consecutive C3H1-type zinc fingers follow at residues 2 to 29 (NTKH…HDLA) and 31 to 58 (SKPS…HVKP). The segment at 76 to 100 (ESTPPLLPTQEAAAPVTKSAPQRRE) is disordered. The segment at 164–191 (DAPQQLCPFAQAGGCHYGESCPYIHGNV) adopts a C3H1-type 3 zinc-finger fold. The interval 192–221 (CEICGLQVLHPYDQEQRGHHEKLCMANFER) is makorin-type Cys-His. The segment at 237–291 (CSICMERVYDKQSPSERRFGILSNCHHTYCLACIRQWRCARQFENPVIKSCPECR) adopts an RING-type zinc-finger fold. The C3H1-type 4 zinc finger occupies 320-349 (GMGKKACKYFDQGRGTCPFGGKCLYLHAYP).

It is found in the cytoplasm. It localises to the nucleus. The enzyme catalyses S-ubiquitinyl-[E2 ubiquitin-conjugating enzyme]-L-cysteine + [acceptor protein]-L-lysine = [E2 ubiquitin-conjugating enzyme]-L-cysteine + N(6)-ubiquitinyl-[acceptor protein]-L-lysine.. It participates in protein modification; protein ubiquitination. Its function is as follows. E3 ubiquitin ligase catalyzing the covalent attachment of ubiquitin moieties onto substrate proteins. Inhibits neurogenesis and axis formation during embryonic development by modulating the phosphatidylinositol 3-kinase (PI3K) pathway. Acts downstream of PI3K and akt1 to up-regulate gsk3b mRNA expression. This is E3 ubiquitin-protein ligase makorin-2 (mkrn2) from Xenopus tropicalis (Western clawed frog).